Reading from the N-terminus, the 181-residue chain is Alkyl hydroperoxide reductase AhpD (181 aa).

Residue Cys-131 is the Proton donor of the active site. A disulfide bond links Cys-131 and Cys-134. The Cysteine sulfenic acid (-SOH) intermediate role is filled by Cys-134.

This sequence belongs to the AhpD family.

The catalysed reaction is N(6)-[(R)-dihydrolipoyl]-L-lysyl-[lipoyl-carrier protein] + a hydroperoxide = N(6)-[(R)-lipoyl]-L-lysyl-[lipoyl-carrier protein] + an alcohol + H2O. Antioxidant protein with alkyl hydroperoxidase activity. Required for the reduction of the AhpC active site cysteine residues and for the regeneration of the AhpC enzyme activity. The polypeptide is Alkyl hydroperoxide reductase AhpD (Rhodopseudomonas palustris (strain BisB18)).